The primary structure comprises 456 residues: L-seryl-tRNA(Sec) selenium transferase (456 aa).

Lysine 288 is modified (N6-(pyridoxal phosphate)lysine).

It belongs to the SelA family. The cofactor is pyridoxal 5'-phosphate.

It is found in the cytoplasm. It catalyses the reaction L-seryl-tRNA(Sec) + selenophosphate + H(+) = L-selenocysteinyl-tRNA(Sec) + phosphate. It functions in the pathway aminoacyl-tRNA biosynthesis; selenocysteinyl-tRNA(Sec) biosynthesis; selenocysteinyl-tRNA(Sec) from L-seryl-tRNA(Sec) (bacterial route): step 1/1. In terms of biological role, converts seryl-tRNA(Sec) to selenocysteinyl-tRNA(Sec) required for selenoprotein biosynthesis. This chain is L-seryl-tRNA(Sec) selenium transferase, found in Helicobacter hepaticus (strain ATCC 51449 / 3B1).